The sequence spans 479 residues: UDP-N-acetylmuramate--L-alanine ligase (479 aa).

115 to 121 is an ATP binding site; that stretch reads GTHGKTT.

Belongs to the MurCDEF family.

The protein resides in the cytoplasm. It carries out the reaction UDP-N-acetyl-alpha-D-muramate + L-alanine + ATP = UDP-N-acetyl-alpha-D-muramoyl-L-alanine + ADP + phosphate + H(+). Its pathway is cell wall biogenesis; peptidoglycan biosynthesis. Functionally, cell wall formation. This is UDP-N-acetylmuramate--L-alanine ligase from Acidiphilium cryptum (strain JF-5).